The sequence spans 324 residues: MPLFNSILDTIGRTPIVRLQRMAPEHTSVYVKVESFNPGGSVKDRLALSVVLDAEAKGLLKPGDTIVECTSGNVGIALAMVAAARGYRFVAVMGDTYSVERRKLIRAYGGKLVLFPGHLGSKGGNLIADELAEKYGWFRARQFDNPANPSYHRETTASEILADFAGKRLDHFVTGFGTTGTLTGVGQMLRVARPEVRVVALEPSNAAMLARGEWSPHQIQGLAPNFVPGVLDRSVIDDLVTMDEVTARDTSRRLAAEEGIFAGISAGATVATALSIAEHAPEGTVLLAMLPDTGERYLSTFLFDGVDEGSDDAWLASLDTGSGL.

At Lys-43 the chain carries N6-(pyridoxal phosphate)lysine. Residues Asn-73, 177–181 (GTTGT), and Ser-265 contribute to the pyridoxal 5'-phosphate site.

Belongs to the cysteine synthase/cystathionine beta-synthase family. Homotetramer. It depends on pyridoxal 5'-phosphate as a cofactor.

It carries out the reaction hydroxyurea + O-acetyl-L-serine = O-ureido-L-serine + acetate + H(+). The enzyme catalyses O-acetyl-L-serine + hydrogen sulfide = L-cysteine + acetate. Involved in the biosynthesis of the antibiotic D-cycloserine (DCS), a cyclic structural analog of D-alanine, used as an antitubercular agent. Catalyzes the addition of hydroxyurea on O-acetyl-L-serine (OAS) to yield O-ureido-L-serine. It prefers sulfide as the second substrate, followed by hydroxyurea, L-homocysteine, and thiosulfate. In Streptomyces lavendulae, this protein is O-ureido-L-serine synthase.